The sequence spans 56 residues: Large ribosomal subunit protein bL32 (56 aa).

Residues 1-16 (MAVQKNRKTRSKRGMR) are compositionally biased toward basic residues. The interval 1 to 37 (MAVQKNRKTRSKRGMRRSHDALGTATMSVDSTSGETH) is disordered. Polar residues predominate over residues 25-35 (ATMSVDSTSGE).

Belongs to the bacterial ribosomal protein bL32 family.

The sequence is that of Large ribosomal subunit protein bL32 from Pseudoalteromonas atlantica (strain T6c / ATCC BAA-1087).